The following is a 247-amino-acid chain: Ribonuclease 3 (247 aa).

One can recognise an RNase III domain in the interval Val-21–Gly-149. Residue Glu-62 coordinates Mg(2+). Asp-66 is a catalytic residue. The Mg(2+) site is built by Asp-135 and Glu-138. Glu-138 is an active-site residue. The 69-residue stretch at Asp-176–Glu-244 folds into the DRBM domain.

It belongs to the ribonuclease III family. As to quaternary structure, homodimer. The cofactor is Mg(2+).

The protein resides in the cytoplasm. The enzyme catalyses Endonucleolytic cleavage to 5'-phosphomonoester.. Functionally, digests double-stranded RNA. Involved in the processing of primary rRNA transcript to yield the immediate precursors to the large and small rRNAs (23S and 16S). Processes some mRNAs, and tRNAs when they are encoded in the rRNA operon. Processes pre-crRNA and tracrRNA of type II CRISPR loci if present in the organism. In Corynebacterium glutamicum (strain ATCC 13032 / DSM 20300 / JCM 1318 / BCRC 11384 / CCUG 27702 / LMG 3730 / NBRC 12168 / NCIMB 10025 / NRRL B-2784 / 534), this protein is Ribonuclease 3.